The primary structure comprises 902 residues: Protein translocase subunit SecA (902 aa).

ATP is bound by residues Gln85, 103–107 (GEGKT), and Asp492. Residues 846–902 (LSYSGGGEEPNQRPKSPRRRSERKIGPNEPCPCGSGKKFKKCHGRVGAPPLPTSQSQ) are disordered. The Zn(2+) site is built by Cys876, Cys878, Cys887, and His888.

The protein belongs to the SecA family. As to quaternary structure, monomer and homodimer. Part of the essential Sec protein translocation apparatus which comprises SecA, SecYEG and auxiliary proteins SecDF. Other proteins may also be involved. It depends on Zn(2+) as a cofactor.

It localises to the cell membrane. Its subcellular location is the cytoplasm. The catalysed reaction is ATP + H2O + cellular proteinSide 1 = ADP + phosphate + cellular proteinSide 2.. Its function is as follows. Part of the Sec protein translocase complex. Interacts with the SecYEG preprotein conducting channel. Has a central role in coupling the hydrolysis of ATP to the transfer of proteins into and across the cell membrane, serving as an ATP-driven molecular motor driving the stepwise translocation of polypeptide chains across the membrane. This chain is Protein translocase subunit SecA, found in Rubrobacter xylanophilus (strain DSM 9941 / JCM 11954 / NBRC 16129 / PRD-1).